Reading from the N-terminus, the 94-residue chain is Small ribosomal subunit protein uS19 (94 aa).

It belongs to the universal ribosomal protein uS19 family.

Protein S19 forms a complex with S13 that binds strongly to the 16S ribosomal RNA. In Clostridium botulinum (strain Langeland / NCTC 10281 / Type F), this protein is Small ribosomal subunit protein uS19.